The primary structure comprises 201 residues: Probable nicotinate-nucleotide adenylyltransferase (201 aa).

The segment at 182–201 (GPESSQSATSIRERGGWSLR) is disordered. Basic and acidic residues predominate over residues 192–201 (IRERGGWSLR).

It belongs to the NadD family.

The enzyme catalyses nicotinate beta-D-ribonucleotide + ATP + H(+) = deamido-NAD(+) + diphosphate. The protein operates within cofactor biosynthesis; NAD(+) biosynthesis; deamido-NAD(+) from nicotinate D-ribonucleotide: step 1/1. Catalyzes the reversible adenylation of nicotinate mononucleotide (NaMN) to nicotinic acid adenine dinucleotide (NaAD). The sequence is that of Probable nicotinate-nucleotide adenylyltransferase from Parvibaculum lavamentivorans (strain DS-1 / DSM 13023 / NCIMB 13966).